A 504-amino-acid polypeptide reads, in one-letter code: MAPSAGEDKHSSAKRVAVIGAGVSGLAAAYKLKIHGLNVTVFEAEGKAGGKLRSVSQDGLIWDEGANTMTESEGDVTFLIDSLGLREKQQFPLSQNKRYIARNGTPVLLPSNPIDLIKSNFLSTGSKLQMLLEPILWKNKKLSQVSDSHESVSGFFQRHFGKEVVDYLIDPFVAGTCGGDPDSLSMHHSFPELWNLEKRFGSVILGAIRSKLSPKNEKKQGPPKTSANKKRQRGSFSFLGGMQTLTDAICKDLREDELRLNSRVLELSCSCTEDSAIDSWSIISASPHKRQSEEESFDAVIMTAPLCDVKSMKIAKRGNPFLLNFIPEVDYVPLSVVITTFKRENVKYPLEGFGVLVPSKEQQHGLKTLGTLFSSMMFPDRAPNNVYLYTTFVGGSRNRELAKASRTELKEIVTSDLKQLLGAEGEPTYVNHLYWSKAFPLYGHNYDSVLDAIDKMEKNLPGLFYAGNHRGGLSVGKALSSGCNAADLVISYLESVSTDSKRHC.

FAD contacts are provided by residues Gly20 to Gly25, Glu43 to Ala44, Lys51, and Gly65 to Thr68. The tract at residues Ser213–Gln232 is disordered. Residues Val264 and Leu473–Val475 each bind FAD.

This sequence belongs to the protoporphyrinogen/coproporphyrinogen oxidase family. Protoporphyrinogen oxidase subfamily. FAD is required as a cofactor.

Its subcellular location is the mitochondrion. The catalysed reaction is protoporphyrinogen IX + 3 O2 = protoporphyrin IX + 3 H2O2. It participates in porphyrin-containing compound metabolism; protoporphyrin-IX biosynthesis; protoporphyrin-IX from protoporphyrinogen-IX: step 1/1. With respect to regulation, inhibited by the herbicide acifluorfen. Its function is as follows. Catalyzes the 6-electron oxidation of protoporphyrinogen-IX to form protoporphyrin-IX. In terms of biological role, provides precursor for the mitochondrial and plastidic heme synthesis and the predominant chlorophyll synthesis in plastids. The polypeptide is Protoporphyrinogen oxidase, mitochondrial (PPXII) (Nicotiana tabacum (Common tobacco)).